The sequence spans 46 residues: Small polypeptide DEVIL 5 (46 aa).

The chain crosses the membrane as a helical span at residues 8-24 (VGGTKRKMWSRGVGGVV). Residues 15–46 (MWSRGVGGVVREQKAKLYIIRRCVVMLLCWHD) are required for DVL/RTFL small polypeptide activity.

It belongs to the DVL/RTFL small polypeptides family. In terms of tissue distribution, mostly expressed in roots and flowers, and, to a lower extent, in leaves and stems.

The protein localises to the cell membrane. Functionally, small polypeptide acting as a regulatory molecule which coordinates cellular responses required for differentiation, growth and development, including leaves shape, pedicule elongation, inflorescence organization and fruit maturation, probably by restricting polar cell proliferation in lateral organs and coordinating socket cell recruitment and differentiation at trichome sites. This chain is Small polypeptide DEVIL 5, found in Arabidopsis thaliana (Mouse-ear cress).